We begin with the raw amino-acid sequence, 447 residues long: MDEEYDVIVLGTGLTECILSGIMSVNGKKVLHMDRNPYYGGESSSITPLEELYKRFQLLEGPPESMGRGRDWNVDLIPKFLMANGQLVKMLLYTEVTRYLDFKVVEGSFVYKGGKIYKVPSTETEALASNLMGMFEKRRFRKFLVFVANFDENDPKTFEGVDPQTTSMRDVYRKFDLGQDVIDFTGHALALYRTDDYLDQPCLETINRIKLYSESLARYGKSPYLYPLYGLGELPQGFARLSAIYGGTYMLNKPVDDIIMENGKVVGVKSEGEVARCKQLICDPSYIPDRVRKAGQVIRIICILSHPIKNTNDANSCQIIIPQNQVNRKSDIYVCMISYAHNVAAQGKYIAIASTTVETTDPEKEVEPALELLEPIDQKFVAISDLYEPIDDGCESQVFCSCSYDATTHFETTCNDIKDIYKRMAGMAFDFENMKRKQNDVFGEAEQ.

The protein belongs to the Rab GDI family. Interacts with RHOH. Interacts with the non-phosphorylated forms of RAB1A, RAB3A, RAB5A, RAB5B, RAB5C, RAB8A, RAB8B, RAB10, RAB12, RAB35, and RAB43.

It is found in the cytoplasm. The protein resides in the golgi apparatus. The protein localises to the trans-Golgi network. Regulates the GDP/GTP exchange reaction of most Rab proteins by inhibiting the dissociation of GDP from them, and the subsequent binding of GTP to them. Promotes the dissociation of GDP-bound Rab proteins from the membrane and inhibits their activation. Promotes the dissociation of RAB1A, RAB3A, RAB5A and RAB10 from membranes. The polypeptide is Rab GDP dissociation inhibitor alpha (GDI1) (Macaca fascicularis (Crab-eating macaque)).